The primary structure comprises 372 residues: Spermidine/putrescine import ATP-binding protein PotA (372 aa).

An ABC transporter domain is found at 11-241 (IELRSITKSY…PANLFVARFI (231 aa)). Position 43–50 (43–50 (GPSGCGKT)) interacts with ATP.

Belongs to the ABC transporter superfamily. Spermidine/putrescine importer (TC 3.A.1.11.1) family. The complex is composed of two ATP-binding proteins (PotA), two transmembrane proteins (PotB and PotC) and a solute-binding protein (PotD).

Its subcellular location is the cell inner membrane. The catalysed reaction is ATP + H2O + polyamine-[polyamine-binding protein]Side 1 = ADP + phosphate + polyamineSide 2 + [polyamine-binding protein]Side 1.. In terms of biological role, part of the ABC transporter complex PotABCD involved in spermidine/putrescine import. Responsible for energy coupling to the transport system. This is Spermidine/putrescine import ATP-binding protein PotA from Aggregatibacter actinomycetemcomitans (Actinobacillus actinomycetemcomitans).